Consider the following 118-residue polypeptide: UPF0295 protein BT9727_0449 (118 aa).

2 consecutive transmembrane segments (helical) span residues 12–32 and 43–63; these read IRTF…LGVF and FMMV…WIGM.

This sequence belongs to the UPF0295 family.

Its subcellular location is the cell membrane. The chain is UPF0295 protein BT9727_0449 from Bacillus thuringiensis subsp. konkukian (strain 97-27).